The primary structure comprises 263 residues: Hydroxyethylthiazole kinase (263 aa).

Residue M41 participates in substrate binding. Positions 117 and 163 each coordinate ATP. Position 190 (G190) interacts with substrate.

Belongs to the Thz kinase family. Requires Mg(2+) as cofactor.

The enzyme catalyses 5-(2-hydroxyethyl)-4-methylthiazole + ATP = 4-methyl-5-(2-phosphooxyethyl)-thiazole + ADP + H(+). Its pathway is cofactor biosynthesis; thiamine diphosphate biosynthesis; 4-methyl-5-(2-phosphoethyl)-thiazole from 5-(2-hydroxyethyl)-4-methylthiazole: step 1/1. In terms of biological role, catalyzes the phosphorylation of the hydroxyl group of 4-methyl-5-beta-hydroxyethylthiazole (THZ). This chain is Hydroxyethylthiazole kinase, found in Lactiplantibacillus plantarum (strain ATCC BAA-793 / NCIMB 8826 / WCFS1) (Lactobacillus plantarum).